The primary structure comprises 2209 residues: Genome polyprotein (2209 aa).

The N-myristoyl glycine; by host moiety is linked to residue Gly-2. The Cytoplasmic portion of the chain corresponds to 2-1520; sequence GAQVSSQKVG…NINRAMTILQ (1519 aa). The segment at 580–600 is amphipathic alpha-helix; sequence GLGQMLESMIDNTVRETVGAA. Catalysis depends on for protease 2A activity residues His-901 and Asp-919. 2 residues coordinate Zn(2+): Cys-936 and Cys-938. The For protease 2A activity role is filled by Cys-990. Residues Cys-996 and His-998 each coordinate Zn(2+). A membrane-binding region spans residues 1128-1200; sequence GDSWLKKFTE…HQSCPSQEHQ (73 aa). An oligomerization region spans residues 1128 to 1266; that stretch reads GDSWLKKFTE…SPGTGKSVAT (139 aa). The interval 1149-1153 is RNA-binding; the sequence is SNKIS. Residues 1232–1388 form the SF3 helicase domain; sequence EHTINNYIQF…NEYSRDGKLN (157 aa). 1256-1263 serves as a coordination point for ATP; sequence GSPGTGKS. The Zn(2+) site is built by Cys-1396, Cys-1399, Cys-1408, and Cys-1413. A C4-type zinc finger spans residues 1396–1413; the sequence is CKNCHQPANFKRCCPLVC. Residues 1440–1447 are RNA-binding; it reads ERNRRSNI. The interval 1451–1456 is oligomerization; it reads MEALFQ. An intramembrane segment occupies 1521 to 1536; it reads AVTTFAAVAGVVYVMY. At 1537-2209 the chain is on the cytoplasmic side; it reads KLFAGHQGAY…TLYRRWLDSF (673 aa). Tyr-1546 bears the O-(5'-phospho-RNA)-tyrosine mark. The Peptidase C3 domain occupies 1566 to 1744; it reads GPGFDYAVAM…FAAALKRSYF (179 aa). Catalysis depends on for protease 3C activity residues His-1605, Glu-1636, and Cys-1712. Residues 1975-2090 enclose the RdRp catalytic domain; that stretch reads EKLFAFDYTG…SYPHEVDASL (116 aa). Residues Asp-1981 and Asp-2076 each coordinate Mg(2+).

Belongs to the picornaviruses polyprotein family. Interacts with capsid protein VP1 and capsid protein VP3 to form heterotrimeric protomers. As to quaternary structure, interacts with capsid protein VP0, and capsid protein VP3 to form heterotrimeric protomers. Interacts with human PVR. Five protomers subsequently associate to form pentamers which serve as building blocks for the capsid. Interacts with capsid protein VP2, capsid protein VP3 and capsid protein VP4 following cleavage of capsid protein VP0. In terms of assembly, interacts with capsid protein VP1 and capsid protein VP3 in the mature capsid. Interacts with capsid protein VP0 and capsid protein VP1 to form heterotrimeric protomers. Five protomers subsequently associate to form pentamers which serve as building blocks for the capsid. Interacts with capsid protein VP4 in the mature capsid. Interacts with protein 2C; this interaction may be important for virion morphogenesis. As to quaternary structure, interacts with capsid protein VP1 and capsid protein VP3. In terms of assembly, homodimer. Homohexamer; forms a hexameric ring structure with 6-fold symmetry characteristic of AAA+ ATPases. Interacts (via N-terminus) with host RTN3 (via reticulon domain); this interaction is important for viral replication. Interacts with capsid protein VP3; this interaction may be important for virion morphogenesis. As to quaternary structure, interacts with protein 3CD. In terms of assembly, homodimer. Interacts with host GBF1. Interacts (via GOLD domain) with host ACBD3 (via GOLD domain); this interaction allows the formation of a viral protein 3A/ACBD3 heterotetramer with a 2:2 stoichiometry, which will stimulate the recruitment of host PI4KB in order to synthesize PI4P at the viral RNA replication sites. Interacts with RNA-directed RNA polymerase. As to quaternary structure, interacts with protein 3AB and with RNA-directed RNA polymerase. In terms of assembly, interacts with Viral protein genome-linked and with protein 3CD. Mg(2+) is required as a cofactor. In terms of processing, specific enzymatic cleavages in vivo by the viral proteases yield processing intermediates and the mature proteins. Post-translationally, myristoylation is required for the formation of pentamers during virus assembly. Further assembly of 12 pentamers and a molecule of genomic RNA generates the provirion. During virion maturation, immature virions are rendered infectious following cleavage of VP0 into VP4 and VP2. This maturation seems to be an autocatalytic event triggered by the presence of RNA in the capsid and it is followed by a conformational change infectious virion. In terms of processing, myristoylation is required during RNA encapsidation and formation of the mature virus particle. Post-translationally, VPg is uridylylated by the polymerase into VPg-pUpU. This acts as a nucleotide-peptide primer for the genomic RNA replication.

The protein localises to the virion. The protein resides in the host cytoplasm. Its subcellular location is the host cytoplasmic vesicle membrane. It is found in the host nucleus. The enzyme catalyses a ribonucleoside 5'-triphosphate + H2O = a ribonucleoside 5'-diphosphate + phosphate + H(+). It carries out the reaction Selective cleavage of Tyr-|-Gly bond in the picornavirus polyprotein.. The catalysed reaction is RNA(n) + a ribonucleoside 5'-triphosphate = RNA(n+1) + diphosphate. It catalyses the reaction Selective cleavage of Gln-|-Gly bond in the poliovirus polyprotein. In other picornavirus reactions Glu may be substituted for Gln, and Ser or Thr for Gly.. Its activity is regulated as follows. Replication or transcription is subject to high level of random mutations by the nucleotide analog ribavirin. Functionally, forms an icosahedral capsid of pseudo T=3 symmetry with capsid proteins VP2 and VP3. The capsid is 300 Angstroms in diameter, composed of 60 copies of each capsid protein and enclosing the viral positive strand RNA genome. Capsid protein VP1 mainly forms the vertices of the capsid. Capsid protein VP1 interacts with host cell receptor PVR to provide virion attachment to target host cells. This attachment induces virion internalization predominantly through clathrin- and caveolin-independent endocytosis in Hela cells and through caveolin-mediated endocytosis in brain microvascular endothelial cells. Tyrosine kinases are probably involved in the entry process. Virus binding to PVR induces increased junctional permeability and rearrangement of junctional proteins. Modulation of endothelial tight junctions, as well as cytolytic infection of endothelial cells themselves, may result in loss of endothelial integrity which may help the virus to reach the CNS. After binding to its receptor, the capsid undergoes conformational changes. Capsid protein VP1 N-terminus (that contains an amphipathic alpha-helix) and capsid protein VP4 are externalized. Together, they shape a pore in the host membrane through which viral genome is translocated to host cell cytoplasm. In terms of biological role, forms an icosahedral capsid of pseudo T=3 symmetry with capsid proteins VP2 and VP3. The capsid is 300 Angstroms in diameter, composed of 60 copies of each capsid protein and enclosing the viral positive strand RNA genome. Lies on the inner surface of the capsid shell. After binding to the host receptor, the capsid undergoes conformational changes. Capsid protein VP4 is released, Capsid protein VP1 N-terminus is externalized, and together, they shape a pore in the host membrane through which the viral genome is translocated into the host cell cytoplasm. Its function is as follows. Component of immature procapsids, which is cleaved into capsid proteins VP4 and VP2 after maturation. Allows the capsid to remain inactive before the maturation step. Functionally, cysteine protease that cleaves viral polyprotein and specific host proteins. It is responsible for the autocatalytic cleavage between the P1 and P2 regions, which is the first cleavage occurring in the polyprotein. Also cleaves the host translation initiation factor EIF4G1, in order to shut down the capped cellular mRNA translation. Inhibits the host nucleus-cytoplasm protein and RNA trafficking by cleaving host members of the nuclear pores including NUP98, NUP62 and NUP153. Counteracts stress granule formation probably by antagonizing its assembly or promoting its dissassembly. Cleaves and inhibits host IFIH1/MDA5, thereby inhibiting the type-I IFN production and the establishment of the antiviral state. Cleaves and inhibits host MAVS, thereby inhibiting the type-I IFN production and the establishment of the antiviral state. In terms of biological role, plays an essential role in the virus replication cycle by acting as a viroporin. Creates a pore in the host endoplasmic reticulum and as a consequence releases Ca2+ in the cytoplasm of infected cell. In turn, high levels of cytoplasmic calcium may trigger membrane trafficking and transport of viral ER-associated proteins to viroplasms, sites of viral genome replication. Induces and associates with structural rearrangements of intracellular membranes. Displays RNA-binding, nucleotide binding and NTPase activities. May play a role in virion morphogenesis and viral RNA encapsidation by interacting with the capsid protein VP3. Its function is as follows. Localizes the viral replication complex to the surface of membranous vesicles. Together with protein 3CD binds the Cis-Active RNA Element (CRE) which is involved in RNA synthesis initiation. Acts as a cofactor to stimulate the activity of 3D polymerase, maybe through a nucleid acid chaperone activity. Functionally, localizes the viral replication complex to the surface of membranous vesicles. It inhibits host cell endoplasmic reticulum-to-Golgi apparatus transport and causes the disassembly of the Golgi complex, possibly through GBF1 interaction. This would result in depletion of MHC, trail receptors and IFN receptors at the host cell surface. Plays an essential role in viral RNA replication by recruiting ACBD3 and PI4KB at the viral replication sites, thereby allowing the formation of the rearranged membranous structures where viral replication takes place. In terms of biological role, acts as a primer for viral RNA replication and remains covalently bound to viral genomic RNA. VPg is uridylylated prior to priming replication into VPg-pUpU. The oriI viral genomic sequence may act as a template for this. The VPg-pUpU is then used as primer on the genomic RNA poly(A) by the RNA-dependent RNA polymerase to replicate the viral genome. During genome replication, the VPg-RNA linkage is removed by the host TDP2, thereby accelerating replication. During the late stage of the replication cycle, host TDP2 is excluded from sites of viral RNA synthesis and encapsidation, allowing for the generation of progeny virions. Involved in the viral replication complex and viral polypeptide maturation. It exhibits protease activity with a specificity and catalytic efficiency that is different from protease 3C. Protein 3CD lacks polymerase activity. Protein 3CD binds to the 5'UTR of the viral genome. Its function is as follows. Major viral protease that mediates proteolytic processing of the polyprotein. Cleaves host EIF5B, contributing to host translation shutoff. Also cleaves host PABPC1, contributing to host translation shutoff. Cleaves host RIGI and thus contributes to the inhibition of type I interferon production. Cleaves host NLRP1, triggers host N-glycine-mediated degradation of the autoinhibitory NLRP1 N-terminal fragment. Inhibits the integrated stress response (ISR) in the infected cell by cleaving host G3BP1. Stress granule formation is thus inhibited, which allows protein synthesis and viral replication. Functionally, replicates the viral genomic RNA on the surface of intracellular membranes. May form linear arrays of subunits that propagate along a strong head-to-tail interaction called interface-I. Covalently attaches UMP to a tyrosine of VPg, which is used to prime RNA synthesis. The positive stranded RNA genome is first replicated at virus induced membranous vesicles, creating a dsRNA genomic replication form. This dsRNA is then used as template to synthesize positive stranded RNA genomes. ss(+)RNA genomes are either translated, replicated or encapsidated. This Homo sapiens (Human) protein is Genome polyprotein.